Here is a 147-residue protein sequence, read N- to C-terminus: Ubiquitin-conjugating enzyme E2-17 kDa (147 aa).

The UBC core domain occupies 1–147 (MALKRINKEL…AREWTRKYAM (147 aa)). Cys85 functions as the Glycyl thioester intermediate in the catalytic mechanism.

This sequence belongs to the ubiquitin-conjugating enzyme family.

It catalyses the reaction S-ubiquitinyl-[E1 ubiquitin-activating enzyme]-L-cysteine + [E2 ubiquitin-conjugating enzyme]-L-cysteine = [E1 ubiquitin-activating enzyme]-L-cysteine + S-ubiquitinyl-[E2 ubiquitin-conjugating enzyme]-L-cysteine.. It participates in protein modification; protein ubiquitination. Functionally, catalyzes the covalent attachment of ubiquitin to other proteins. Mediates the selective degradation of short-lived and abnormal proteins. Required for proper telomere behavior during cell divisions and possibly for ubiquitination of proteins involved in postmeiotic stages of spermatogenesis. Deletion mutations are lethal in homozygotes. This Drosophila melanogaster (Fruit fly) protein is Ubiquitin-conjugating enzyme E2-17 kDa (eff).